We begin with the raw amino-acid sequence, 536 residues long: Phosphoenolpyruvate carboxykinase (ATP) (536 aa).

Substrate contacts are provided by Arg61, Tyr195, and Lys201. ATP is bound by residues Lys201, His220, and 236–244; that span reads GLSGTGKTT. 2 residues coordinate Mn(2+): Lys201 and His220. Asp257 serves as a coordination point for Mn(2+). ATP is bound by residues Glu285, Arg322, and Thr447. Arg322 is a binding site for substrate.

This sequence belongs to the phosphoenolpyruvate carboxykinase (ATP) family. It depends on Mn(2+) as a cofactor.

The protein localises to the cytoplasm. It catalyses the reaction oxaloacetate + ATP = phosphoenolpyruvate + ADP + CO2. Its pathway is carbohydrate biosynthesis; gluconeogenesis. In terms of biological role, involved in the gluconeogenesis. Catalyzes the conversion of oxaloacetate (OAA) to phosphoenolpyruvate (PEP) through direct phosphoryl transfer between the nucleoside triphosphate and OAA. The chain is Phosphoenolpyruvate carboxykinase (ATP) from Allorhizobium ampelinum (strain ATCC BAA-846 / DSM 112012 / S4) (Agrobacterium vitis (strain S4)).